Reading from the N-terminus, the 681-residue chain is Envelope glycoprotein (681 aa).

An N-terminal signal peptide occupies residues 1 to 18; that stretch reads MKTTCLLISLILIQGVKT. The Extracellular portion of the chain corresponds to 19 to 648; it reads LPILEIASNI…GLGGKWWTSD (630 aa). The tract at residues 38 to 188 is receptor-binding; it reads SGTLQKTEDV…FSRQGQGYRH (151 aa). N-linked (GlcNAc...) asparagine; by host glycans are attached at residues Asn-94, Asn-171, Asn-190, Asn-202, Asn-207, Asn-219, Asn-223, and Asn-255. A disordered region spans residues 222-424; sequence KNQTCAPSKK…TSPSPTPNST (203 aa). Polar residues-rich tracts occupy residues 244-259, 278-290, and 308-331; these read LTST…TTDP, PYTT…KQGL, and GGNN…TAQP. The tract at residues 277-455 is mucin-like region; that stretch reads EPYTTSDAAT…PFLDGLINAP (179 aa). 12 N-linked (GlcNAc...) asparagine; by host glycosylation sites follow: Asn-310, Asn-313, Asn-326, Asn-337, Asn-344, Asn-345, Asn-350, Asn-360, Asn-397, Asn-408, Asn-422, and Asn-487. The segment covering 337–347 has biased composition (low complexity); it reads NTTTISTNNTS. Positions 348-388 are enriched in polar residues; the sequence is KHNLSTPSVPIQNATNYNTQSTAPENEQTSAPSKTTLLPTE. A compositionally biased stretch (low complexity) spans 389–424; sequence NPTTAKSTNSTKSPTTTVPNTTNKYSTSPSPTPNST. The segment at 529-549 is fusion peptide; it reads GLSWIPFFGPGIEGLYTAGLI. N-linked (GlcNAc...) asparagine; by host glycans are attached at residues Asn-564 and Asn-619. The chain crosses the membrane as a helical span at residues 649–669; that stretch reads WGVLTNLGILLLLSIAVLIAL. At 670 to 681 the chain is on the cytoplasmic side; it reads SCICRIFTKYIG. S-palmitoyl cysteine; by host attachment occurs at residues Cys-671 and Cys-673.

This sequence belongs to the filoviruses glycoprotein family. In terms of assembly, homotrimer; each monomer consists of a GP1 and a GP2 subunit linked by disulfide bonds. The resulting peplomers (GP1,2) protrude from the virus surface as spikes. GP1,2 interacts with human CD209 and CLEC4M (collectively referred to as DC-SIGN(R)). Asialoglycoprotein receptor (ASGP-R) may be a liver-specific receptor for GP1,2. Members of the Tyro3 receptor tyrosine kinase family may be cell entry factors interacting with GP1,2. Post-translationally, N-glycosylated. In terms of processing, O-glycosylated in the mucin-like region. Specific enzymatic cleavages in vivo yield mature proteins. The precursor is processed into GP1 and GP2 by host cell furin in the trans Golgi, and maybe by other host proteases, to yield the mature GP1 and GP2 proteins. The cleavage site corresponds to the furin optimal cleavage sequence [KR]-X-[KR]-R. Post-translationally, GP1 is phosphorylated on serine residues between residues 260 and 273.

It is found in the virion membrane. Its subcellular location is the host cell membrane. Functionally, GP1 is responsible for binding to the receptor(s) on target cells. Interacts with CD209/DC-SIGN and CLEC4M/DC-SIGNR which act as cofactors for virus entry into the host cell. Binding to CD209 and CLEC4M, which are respectively found on dendritic cells (DCs), and on endothelial cells of liver sinusoids and lymph node sinuses, facilitate infection of macrophages and endothelial cells. These interactions not only facilitate virus cell entry, but also allow capture of viral particles by DCs and subsequent transmission to susceptible cells without DCs infection (trans infection). GP2 acts as a class I viral fusion protein. Under the current model, the protein has at least 3 conformational states: pre-fusion native state, pre-hairpin intermediate state, and post-fusion hairpin state. During viral and target cell membrane fusion, the coiled coil regions (heptad repeats) assume a trimer-of-hairpins structure, positioning the fusion peptide in close proximity to the C-terminal region of the ectodomain. The formation of this structure appears to drive apposition and subsequent fusion of viral and target cell membranes. Responsible for penetration of the virus into the cell cytoplasm by mediating the fusion of the membrane of the endocytosed virus particle with the endosomal membrane. Low pH in endosomes induces an irreversible conformational change in GP2, releasing the fusion hydrophobic peptide. The chain is Envelope glycoprotein (GP) from Chlorocebus aethiops (Green monkey).